Consider the following 299-residue polypeptide: Apolipoprotein E (299 aa).

The signal sequence occupies residues 1–18 (MKVLWAVLVVTLLAGCRA). Tandem repeats lie at residues 74 to 95 (LLMEDTMKEVKAYKAELEQELA), 96 to 117 (PMAEDTRARLSKELQAAQARLG), 118 to 139 (ADMEEVRNRLAQYRGEVQAMLG), 140 to 161 (QSAEELRARLASHLRKMRKRLL), 162 to 183 (RDAEDLQKRLAVYKAGAREGAE), 184 to 205 (RGVSAIRERLASLVEQGRLRSA), and 224 to 245 (GRLEEVGGQARDRLDVVREQME). Residues 74-245 (LLMEDTMKEV…RLDVVREQME (172 aa)) are 8 X 22 AA approximate tandem repeats. Residue methionine 137 is modified to Methionine sulfoxide. Phosphoserine is present on serine 141. The tract at residues 152 to 162 (HLRKMRKRLLR) is LDL and other lipoprotein receptors binding. Position 156-159 (156-159 (MRKR)) interacts with heparin. A lipid-binding and lipoprotein association region spans residues 204–273 (SALTSQPLRE…GWFEPMVEDM (70 aa)). 219–226 (GERLRGRL) contacts heparin. Residues 261–273 (RLKGWFEPMVEDM) are specificity for association with VLDL.

The protein belongs to the apolipoprotein A1/A4/E family. In terms of assembly, homotetramer. May interact with ABCA1; functionally associated with ABCA1 in the biogenesis of HDLs. May interact with APP/A4 amyloid-beta peptide; the interaction is extremely stable in vitro but its physiological significance is unclear. May interact with MAPT. May interact with MAP2. In the cerebrospinal fluid, interacts with secreted SORL1. Interacts with PMEL; this allows the loading of PMEL luminal fragment on ILVs to induce fibril nucleation. Post-translationally, APOE exists as multiple glycosylated and sialylated glycoforms within cells and in plasma. The extent of glycosylation and sialylation are tissue and context specific. In terms of processing, glycated in plasma VLDL. Phosphorylated by FAM20C in the extracellular medium.

The protein resides in the secreted. It is found in the extracellular space. Its subcellular location is the extracellular matrix. The protein localises to the extracellular vesicle. It localises to the endosome. The protein resides in the multivesicular body. Its function is as follows. APOE is an apolipoprotein, a protein associating with lipid particles, that mainly functions in lipoprotein-mediated lipid transport between organs via the plasma and interstitial fluids. APOE is a core component of plasma lipoproteins and is involved in their production, conversion and clearance. Apolipoproteins are amphipathic molecules that interact both with lipids of the lipoprotein particle core and the aqueous environment of the plasma. As such, APOE associates with chylomicrons, chylomicron remnants, very low density lipoproteins (VLDL) and intermediate density lipoproteins (IDL) but shows a preferential binding to high-density lipoproteins (HDL). It also binds a wide range of cellular receptors including the LDL receptor/LDLR, the LDL receptor-related proteins LRP1, LRP2 and LRP8 and the very low-density lipoprotein receptor/VLDLR that mediate the cellular uptake of the APOE-containing lipoprotein particles. Finally, APOE also has a heparin-binding activity and binds heparan-sulfate proteoglycans on the surface of cells, a property that supports the capture and the receptor-mediated uptake of APOE-containing lipoproteins by cells. A main function of APOE is to mediate lipoprotein clearance through the uptake of chylomicrons, VLDLs, and HDLs by hepatocytes. APOE is also involved in the biosynthesis by the liver of VLDLs as well as their uptake by peripheral tissues ensuring the delivery of triglycerides and energy storage in muscle, heart and adipose tissues. By participating in the lipoprotein-mediated distribution of lipids among tissues, APOE plays a critical role in plasma and tissues lipid homeostasis. APOE is also involved in two steps of reverse cholesterol transport, the HDLs-mediated transport of cholesterol from peripheral tissues to the liver, and thereby plays an important role in cholesterol homeostasis. First, it is functionally associated with ABCA1 in the biogenesis of HDLs in tissues. Second, it is enriched in circulating HDLs and mediates their uptake by hepatocytes. APOE also plays an important role in lipid transport in the central nervous system, regulating neuron survival and sprouting. The protein is Apolipoprotein E (APOE) of Erethizon dorsatum (North American porcupine).